The following is a 918-amino-acid chain: GPI ethanolamine phosphate transferase 3 (918 aa).

A helical transmembrane segment spans residues 16 to 36 (IGTWKYIQACIFFAIILISNF). Asparagine 54, asparagine 71, asparagine 101, asparagine 197, and asparagine 399 each carry an N-linked (GlcNAc...) asparagine glycan. 15 helical membrane passes run 429–449 (LFPM…LALL), 459–479 (MSAN…ILIL), 486–506 (SPFP…LNSF), 523–543 (FSIF…FTVW), 547–563 (LCHF…FCKC), 567–587 (MSPL…LQVI), 616–636 (TLIV…ILQL), 651–671 (LSIL…HHVF), 687–707 (SLAN…FFLL), 715–735 (INVI…LSFL), 738–758 (PLGH…IQLK), 762–782 (PSVG…SHFF), 813–833 (IFMF…IPLF), 853–873 (FSFI…AGFF), and 887–907 (FMLS…QCFG).

It belongs to the PIGG/PIGN/PIGO family. PIGO subfamily. Post-translationally, glycosylated.

The protein resides in the endoplasmic reticulum membrane. It participates in glycolipid biosynthesis; glycosylphosphatidylinositol-anchor biosynthesis. Involved in glycosylphosphatidylinositol-anchor biosynthesis. Transfers ethanolamine phosphate to the GPI third mannose which links the GPI-anchor to the C-terminus of the proteins by an amide bond. Involved in cell wall biosynthesis. This chain is GPI ethanolamine phosphate transferase 3 (gpi13), found in Schizosaccharomyces pombe (strain 972 / ATCC 24843) (Fission yeast).